Reading from the N-terminus, the 482-residue chain is ATP synthase subunit beta (482 aa).

162-169 contacts ATP; that stretch reads GGAGVGKT.

This sequence belongs to the ATPase alpha/beta chains family. F-type ATPases have 2 components, CF(1) - the catalytic core - and CF(0) - the membrane proton channel. CF(1) has five subunits: alpha(3), beta(3), gamma(1), delta(1), epsilon(1). CF(0) has four main subunits: a(1), b(1), b'(1) and c(9-12).

It is found in the cellular thylakoid membrane. It catalyses the reaction ATP + H2O + 4 H(+)(in) = ADP + phosphate + 5 H(+)(out). Its function is as follows. Produces ATP from ADP in the presence of a proton gradient across the membrane. The catalytic sites are hosted primarily by the beta subunits. This chain is ATP synthase subunit beta, found in Nostoc sp. (strain PCC 7120 / SAG 25.82 / UTEX 2576).